Consider the following 272-residue polypeptide: B3 domain-containing protein Os10g0323000 (272 aa).

Residues R39–H132 constitute a DNA-binding region (TF-B3 1). Positions P139–I171 are disordered. The segment covering S141–G159 has biased composition (basic and acidic residues). The segment at residues E180–F272 is a DNA-binding region (TF-B3 2).

It localises to the nucleus. The polypeptide is B3 domain-containing protein Os10g0323000 (Oryza sativa subsp. japonica (Rice)).